The sequence spans 436 residues: tRNA(Ile)-lysidine synthase (436 aa).

An ATP-binding site is contributed by 21-26 (SGGVDS).

Belongs to the tRNA(Ile)-lysidine synthase family.

The protein localises to the cytoplasm. The catalysed reaction is cytidine(34) in tRNA(Ile2) + L-lysine + ATP = lysidine(34) in tRNA(Ile2) + AMP + diphosphate + H(+). Its function is as follows. Ligates lysine onto the cytidine present at position 34 of the AUA codon-specific tRNA(Ile) that contains the anticodon CAU, in an ATP-dependent manner. Cytidine is converted to lysidine, thus changing the amino acid specificity of the tRNA from methionine to isoleucine. The chain is tRNA(Ile)-lysidine synthase from Aster yellows witches'-broom phytoplasma (strain AYWB).